A 243-amino-acid chain; its full sequence is UPF0246 protein MGAS9429_Spy1799 (243 aa).

Belongs to the UPF0246 family.

This chain is UPF0246 protein MGAS9429_Spy1799, found in Streptococcus pyogenes serotype M12 (strain MGAS9429).